The chain runs to 116 residues: Small ribosomal subunit protein uS13m (116 aa).

It belongs to the universal ribosomal protein uS13 family. Part of the small ribosomal subunit.

Its subcellular location is the mitochondrion. Functionally, located at the top of the head of the small subunit, it contacts several helices of the 18S rRNA. This chain is Small ribosomal subunit protein uS13m (RPS13), found in Daucus carota (Wild carrot).